A 716-amino-acid chain; its full sequence is Eosinophil peroxidase (716 aa).

An N-terminal signal peptide occupies residues 1-18; sequence MMQQLLALVGALATLILT. Positions 19–140 are excised as a propeptide; the sequence is QHAEGTAPAS…SGCALQDQAE (122 aa). 2 N-linked (GlcNAc...) asparagine glycosylation sites follow: asparagine 53 and asparagine 114. Cysteine 142 and cysteine 153 are oxidised to a cystine. Aspartate 233 serves as a coordination point for heme b. Histidine 234 acts as the Proton acceptor in catalysis. Position 235 (aspartate 235) interacts with Ca(2+). 2 disulfide bridges follow: cysteine 254-cysteine 264 and cysteine 258-cysteine 282. Ca(2+) is bound by residues threonine 307, phenylalanine 309, aspartate 311, and serine 313. Residues asparagine 328 and asparagine 364 are each glycosylated (N-linked (GlcNAc...) asparagine). An intrachain disulfide couples cysteine 360 to cysteine 371. Heme b is bound by residues glutamate 381 and histidine 475. Tyrosine 489 carries the post-translational modification 3'-nitrotyrosine. 2 cysteine pairs are disulfide-bonded: cysteine 579/cysteine 636 and cysteine 677/cysteine 702. N-linked (GlcNAc...) asparagine glycosylation is present at asparagine 709.

Belongs to the peroxidase family. XPO subfamily. Tetramer of two light chains and two heavy chains. The cofactor is Ca(2+). Heme b serves as cofactor.

The protein localises to the cytoplasmic granule. The enzyme catalyses 2 a phenolic donor + H2O2 = 2 a phenolic radical donor + 2 H2O. In terms of biological role, mediates tyrosine nitration of secondary granule proteins in mature resting eosinophils. This is Eosinophil peroxidase (Epx) from Mus musculus (Mouse).